The sequence spans 1755 residues: Transposon Ty1-ER2 Gag-Pol polyprotein (1755 aa).

Composition is skewed to polar residues over residues Met-1 to Pro-10, Thr-48 to Ser-60, and Gln-127 to Phe-152. Disordered regions lie at residues Met-1–Gln-93, Pro-126–Pro-173, and Gly-352–Thr-421. The segment covering Thr-153–Thr-165 has biased composition (low complexity). Positions Asn-299 to His-401 are RNA-binding. A compositionally biased stretch (low complexity) spans Asn-402–Ser-418. Asp-461 acts as the For protease activity; shared with dimeric partner in catalysis. An integrase-type zinc finger-like region spans residues Asn-583–Cys-640. In terms of domain architecture, Integrase catalytic spans Asn-660 to Pro-835. Positions 671 and 736 each coordinate Mg(2+). The interval Ala-958–Asn-1170 is disordered. Over residues Ser-960–Thr-969 the composition is skewed to low complexity. The span at Ser-1005 to Thr-1015 shows a compositional bias: polar residues. The span at Glu-1038–Ser-1053 shows a compositional bias: basic and acidic residues. Composition is skewed to polar residues over residues Tyr-1054–Glu-1082 and Ser-1095–Leu-1106. The short motif at Lys-1178–Arg-1212 is the Bipartite nuclear localization signal element. A Reverse transcriptase Ty1/copia-type domain is found at Asn-1338–Gln-1476. The Mg(2+) site is built by Asp-1346, Asp-1427, Asp-1428, Asp-1610, Glu-1652, and Asp-1685. One can recognise an RNase H Ty1/copia-type domain in the interval Asp-1610–Lys-1752.

The capsid protein forms a homotrimer, from which the VLPs are assembled. The protease is a homodimer, whose active site consists of two apposed aspartic acid residues. Initially, virus-like particles (VLPs) are composed of the structural unprocessed proteins Gag and Gag-Pol, and also contain the host initiator methionine tRNA (tRNA(i)-Met) which serves as a primer for minus-strand DNA synthesis, and a dimer of genomic Ty RNA. Processing of the polyproteins occurs within the particle and proceeds by an ordered pathway, called maturation. First, the protease (PR) is released by autocatalytic cleavage of the Gag-Pol polyprotein yielding capsid protein p45 and a Pol-p154 precursor protein. This cleavage is a prerequisite for subsequent processing of Pol-p154 at the remaining sites to release the mature structural and catalytic proteins. Maturation takes place prior to the RT reaction and is required to produce transposition-competent VLPs.

The protein resides in the cytoplasm. It localises to the nucleus. It carries out the reaction DNA(n) + a 2'-deoxyribonucleoside 5'-triphosphate = DNA(n+1) + diphosphate. The enzyme catalyses Endonucleolytic cleavage to 5'-phosphomonoester.. In terms of biological role, capsid protein (CA) is the structural component of the virus-like particle (VLP), forming the shell that encapsulates the retrotransposons dimeric RNA genome. The particles are assembled from trimer-clustered units and there are holes in the capsid shells that allow for the diffusion of macromolecules. CA also has nucleocapsid-like chaperone activity, promoting primer tRNA(i)-Met annealing to the multipartite primer-binding site (PBS), dimerization of Ty1 RNA and initiation of reverse transcription. The aspartyl protease (PR) mediates the proteolytic cleavages of the Gag and Gag-Pol polyproteins after assembly of the VLP. Functionally, reverse transcriptase/ribonuclease H (RT) is a multifunctional enzyme that catalyzes the conversion of the retro-elements RNA genome into dsDNA within the VLP. The enzyme displays a DNA polymerase activity that can copy either DNA or RNA templates, and a ribonuclease H (RNase H) activity that cleaves the RNA strand of RNA-DNA heteroduplexes during plus-strand synthesis and hydrolyzes RNA primers. The conversion leads to a linear dsDNA copy of the retrotransposon that includes long terminal repeats (LTRs) at both ends. Its function is as follows. Integrase (IN) targets the VLP to the nucleus, where a subparticle preintegration complex (PIC) containing at least integrase and the newly synthesized dsDNA copy of the retrotransposon must transit the nuclear membrane. Once in the nucleus, integrase performs the integration of the dsDNA into the host genome. The chain is Transposon Ty1-ER2 Gag-Pol polyprotein (TY1B-ER2) from Saccharomyces cerevisiae (strain ATCC 204508 / S288c) (Baker's yeast).